We begin with the raw amino-acid sequence, 310 residues long: Acetylglutamate kinase (310 aa).

Substrate contacts are provided by residues 76 to 77 (GG), Arg-98, and Asn-203.

Belongs to the acetylglutamate kinase family. ArgB subfamily.

Its subcellular location is the cytoplasm. It carries out the reaction N-acetyl-L-glutamate + ATP = N-acetyl-L-glutamyl 5-phosphate + ADP. Its pathway is amino-acid biosynthesis; L-arginine biosynthesis; N(2)-acetyl-L-ornithine from L-glutamate: step 2/4. Functionally, catalyzes the ATP-dependent phosphorylation of N-acetyl-L-glutamate. The protein is Acetylglutamate kinase of Cutibacterium acnes (strain DSM 16379 / KPA171202) (Propionibacterium acnes).